The following is a 455-amino-acid chain: 3-isopropylmalate dehydratase large subunit (455 aa).

The [4Fe-4S] cluster site is built by Cys-336, Cys-396, and Cys-399.

Belongs to the aconitase/IPM isomerase family. LeuC type 1 subfamily. In terms of assembly, heterodimer of LeuC and LeuD. [4Fe-4S] cluster serves as cofactor.

It carries out the reaction (2R,3S)-3-isopropylmalate = (2S)-2-isopropylmalate. The protein operates within amino-acid biosynthesis; L-leucine biosynthesis; L-leucine from 3-methyl-2-oxobutanoate: step 2/4. Functionally, catalyzes the isomerization between 2-isopropylmalate and 3-isopropylmalate, via the formation of 2-isopropylmaleate. The protein is 3-isopropylmalate dehydratase large subunit of Staphylococcus aureus (strain MRSA252).